A 258-amino-acid chain; its full sequence is Phosphoadenosine 5'-phosphosulfate reductase (258 aa).

Residue cysteine 244 is the Nucleophile; cysteine thiosulfonate intermediate of the active site.

The protein belongs to the PAPS reductase family. CysH subfamily.

The protein resides in the cytoplasm. It catalyses the reaction [thioredoxin]-disulfide + sulfite + adenosine 3',5'-bisphosphate + 2 H(+) = [thioredoxin]-dithiol + 3'-phosphoadenylyl sulfate. The protein operates within sulfur metabolism; hydrogen sulfide biosynthesis; sulfite from sulfate: step 3/3. In terms of biological role, catalyzes the formation of sulfite from phosphoadenosine 5'-phosphosulfate (PAPS) using thioredoxin as an electron donor. This is Phosphoadenosine 5'-phosphosulfate reductase from Vibrio vulnificus (strain YJ016).